The following is a 519-amino-acid chain: Tachykinin-like peptides receptor 99D (519 aa).

The Extracellular portion of the chain corresponds to 1–100; sequence MENRSDFEAD…SFAFVVPWWR (100 aa). N-linked (GlcNAc...) asparagine glycans are attached at residues asparagine 3, asparagine 19, asparagine 22, and asparagine 61. The helical transmembrane segment at 101 to 123 threads the bilayer; the sequence is QVLWSILFGGMVIVATGGNLIVV. Topologically, residues 124–134 are cytoplasmic; the sequence is WIVMTTKRMRT. The helical transmembrane segment at 135-155 threads the bilayer; the sequence is VTNYFIVNLSIADAMVSSLNV. Residues 156 to 175 are Extracellular-facing; it reads TFNYYYMLDSDWPFGEFYCK. Cysteine 174 and cysteine 254 form a disulfide bridge. A helical membrane pass occupies residues 176 to 197; it reads LSQFIAMLSICASVFTLMAISI. Over 198–217 the chain is Cytoplasmic; that stretch reads DRYVAIIRPLQPRMSKRCNL. The chain crosses the membrane as a helical span at residues 218 to 238; sequence AIAAVIWLASTLISCPMMIIY. Residues 239 to 270 lie on the Extracellular side of the membrane; the sequence is RTEEVPVRGLSNRTVCYPEWPDGPTNHSTMES. Residues 271-292 traverse the membrane as a helical segment; sequence LYNILIIILTYFLPIVSMTVTY. Residues 293-324 are Cytoplasmic-facing; it reads SRVGIELWGSKTIGECTPRQVENVRSKRRVVK. A helical membrane pass occupies residues 325–346; the sequence is MMIVVVLIFAICWLPFHSYFII. Residues 347-361 lie on the Extracellular side of the membrane; sequence TSCYPAITEAPFIQE. The chain crosses the membrane as a helical span at residues 362 to 384; that stretch reads LYLAIYWLAMSNSMYNPIIYCWM. Topologically, residues 385–519 are cytoplasmic; sequence NSRFRYGFKM…STANTTQLLS (135 aa). The S-palmitoyl cysteine moiety is linked to residue cysteine 399. The disordered stretch occupies residues 444–519; sequence PSSPKSHRIS…STANTTQLLS (76 aa). Composition is skewed to polar residues over residues 454–465 and 487–499; these read HSGTGRSATLRN and SYQQEMQQRWSGP. Over residues 500–519 the composition is skewed to low complexity; it reads NSATAVTNSSSTANTTQLLS.

It belongs to the G-protein coupled receptor 1 family. As to expression, during late embryogenesis (stages 11-15), expressed in the brain and in a specific subset of neurons in each neuromere of the developing ventral ganglion. Expressed in the cortex of the adult brain, which contains the neuronal cell bodies.

It is found in the cell membrane. Its function is as follows. Receptor for tachykinin-like peptides. The polypeptide is Tachykinin-like peptides receptor 99D (TkR99D) (Drosophila melanogaster (Fruit fly)).